Here is a 364-residue protein sequence, read N- to C-terminus: DNA polymerase IV (364 aa).

The UmuC domain maps to 14 to 198 (IIHIDMDAFF…LPIEKFHGVG (185 aa)). Positions 18 and 116 each coordinate Mg(2+). Residue E117 is part of the active site.

The protein belongs to the DNA polymerase type-Y family. As to quaternary structure, monomer. It depends on Mg(2+) as a cofactor.

It is found in the cytoplasm. The catalysed reaction is DNA(n) + a 2'-deoxyribonucleoside 5'-triphosphate = DNA(n+1) + diphosphate. In terms of biological role, poorly processive, error-prone DNA polymerase involved in untargeted mutagenesis. Copies undamaged DNA at stalled replication forks, which arise in vivo from mismatched or misaligned primer ends. These misaligned primers can be extended by PolIV. Exhibits no 3'-5' exonuclease (proofreading) activity. May be involved in translesional synthesis, in conjunction with the beta clamp from PolIII. This is DNA polymerase IV from Streptococcus pyogenes serotype M2 (strain MGAS10270).